The primary structure comprises 802 residues: MARLFSLKPLVLALGFCFGTHCAAADAVAAEETDNPTAGGSVRSVSEPIQPTSLSLGSTCLFCSNESGSPERTEAAVQGSGEASIPEDYTRIVADRMEGQSQVQVRAEGNVVVERNRTTLNADWADYDQSGDTVTAGDRFALQQDGTLIRGETLTYNLEQQTGEAHNVRMETEHGGRRLQSVSRTAEMLGEGHYKLTETQFNTCSAGDAGWYVKAASVEADREKGIGVAKHAAFVFGGVPIFYTPWADFPLDGNRKSGLLVPSLSAGSDGVSLSVPYYFNLAPNLDATFAPGVIGERGAVFDGQVRYLRPDYAGQSDLTWLPHDKKSGRNNRYQAKWQHRHDISDTLQAGVDFNQVSDSGYYRDFYGNKEIAGNVNLNRRVWLDYGGRAAGGSLNAGLSVLKYQTLANQSGYKDKPYALMPRLSADWRKNTGRAQIGVSAQFTRFSHDSRQDGSRLVVYPDIKWDFSNSWGYVRPKLGLHATYYSLNRFGSQEARRVSRTLPIVNIDSGMTFERNTRMFGGGVLQTLEPRLFYNYIPAKSQNDLPNFDSSESSFGYGQLFRENLYYGNDRINTANSLSAAVQSRILDGATGEERFRAGIGQKFYFKNDAVMLDGSVGKKPRSRSDWVAFASSGIGSRFILDSSIHYNQNDKRAENYAVGASYRPAQGKVLNARYKYGRNEKIYLKSDGSYFYDKLSQLDLSAQWPLTRNLSAVVRYNYGFEAKKPIEVLAGAEYKSSCGCWGAGVYAQRYVTGENTYKNAVFFSLQLKDLSSVGRNPADRMDVAVPGYIPAHSLSAGRNKRP.

The first 29 residues, 1–29 (MARLFSLKPLVLALGFCFGTHCAAADAVA), serve as a signal peptide directing secretion.

Belongs to the LptD family. In terms of assembly, component of the lipopolysaccharide transport and assembly complex. Interacts with LptE and LptA.

It localises to the cell outer membrane. Together with LptE, is involved in the assembly of lipopolysaccharide (LPS) at the surface of the outer membrane. In Neisseria meningitidis serogroup A / serotype 4A (strain DSM 15465 / Z2491), this protein is LPS-assembly protein LptD.